The chain runs to 446 residues: Bifunctional protein GlmU (446 aa).

Residues 1 to 226 (MLAVAILAAG…PDEVNGINDR (226 aa)) form a pyrophosphorylase region. Residues 7-10 (LAAG), Lys21, Gln73, and 78-79 (GT) each bind UDP-N-acetyl-alpha-D-glucosamine. Residue Asp103 participates in Mg(2+) binding. UDP-N-acetyl-alpha-D-glucosamine contacts are provided by Gly140, Glu155, Asn170, and Asn224. Asn224 lines the Mg(2+) pocket. The linker stretch occupies residues 227–247 (CQLANCEALLQERLRNYWMKE). The segment at 248-446 (GVTFTDPASC…SKQLIKNGWQ (199 aa)) is N-acetyltransferase. UDP-N-acetyl-alpha-D-glucosamine is bound by residues Arg329 and Lys347. His359 acts as the Proton acceptor in catalysis. Residues Tyr362 and Asn373 each coordinate UDP-N-acetyl-alpha-D-glucosamine. Residues Ala376, 382–383 (NY), Ala419, and Arg436 contribute to the acetyl-CoA site.

This sequence in the N-terminal section; belongs to the N-acetylglucosamine-1-phosphate uridyltransferase family. In the C-terminal section; belongs to the transferase hexapeptide repeat family. As to quaternary structure, homotrimer. Mg(2+) serves as cofactor.

The protein resides in the cytoplasm. The enzyme catalyses alpha-D-glucosamine 1-phosphate + acetyl-CoA = N-acetyl-alpha-D-glucosamine 1-phosphate + CoA + H(+). It catalyses the reaction N-acetyl-alpha-D-glucosamine 1-phosphate + UTP + H(+) = UDP-N-acetyl-alpha-D-glucosamine + diphosphate. The protein operates within nucleotide-sugar biosynthesis; UDP-N-acetyl-alpha-D-glucosamine biosynthesis; N-acetyl-alpha-D-glucosamine 1-phosphate from alpha-D-glucosamine 6-phosphate (route II): step 2/2. It participates in nucleotide-sugar biosynthesis; UDP-N-acetyl-alpha-D-glucosamine biosynthesis; UDP-N-acetyl-alpha-D-glucosamine from N-acetyl-alpha-D-glucosamine 1-phosphate: step 1/1. It functions in the pathway bacterial outer membrane biogenesis; LPS lipid A biosynthesis. In terms of biological role, catalyzes the last two sequential reactions in the de novo biosynthetic pathway for UDP-N-acetylglucosamine (UDP-GlcNAc). The C-terminal domain catalyzes the transfer of acetyl group from acetyl coenzyme A to glucosamine-1-phosphate (GlcN-1-P) to produce N-acetylglucosamine-1-phosphate (GlcNAc-1-P), which is converted into UDP-GlcNAc by the transfer of uridine 5-monophosphate (from uridine 5-triphosphate), a reaction catalyzed by the N-terminal domain. The chain is Bifunctional protein GlmU from Prochlorococcus marinus (strain MIT 9313).